The chain runs to 227 residues: Putative ankyrin repeat protein L45 (227 aa).

ANK repeat units lie at residues 38–66, 78–107, 108–137, 139–167, 168–197, and 199–227; these read FETN…NINH, CLEE…NIFH, NENC…DVRA, NDYA…DVRS, CDSY…NYRA, and NHHA…GITK.

The protein is Putative ankyrin repeat protein L45 of Acanthamoeba polyphaga mimivirus (APMV).